Reading from the N-terminus, the 184-residue chain is Ribosome-recycling factor (184 aa).

The protein belongs to the RRF family.

It localises to the cytoplasm. In terms of biological role, responsible for the release of ribosomes from messenger RNA at the termination of protein biosynthesis. May increase the efficiency of translation by recycling ribosomes from one round of translation to another. The protein is Ribosome-recycling factor of Acholeplasma laidlawii (strain PG-8A).